The following is a 602-amino-acid chain: Elongation factor 4 (602 aa).

Residues 7–188 (ENIRNFSIIA…AIIELIPPPK (182 aa)) form the tr-type G domain. GTP contacts are provided by residues 19-24 (DHGKST) and 135-138 (NKID).

Belongs to the TRAFAC class translation factor GTPase superfamily. Classic translation factor GTPase family. LepA subfamily.

The protein localises to the cell inner membrane. The enzyme catalyses GTP + H2O = GDP + phosphate + H(+). Required for accurate and efficient protein synthesis under certain stress conditions. May act as a fidelity factor of the translation reaction, by catalyzing a one-codon backward translocation of tRNAs on improperly translocated ribosomes. Back-translocation proceeds from a post-translocation (POST) complex to a pre-translocation (PRE) complex, thus giving elongation factor G a second chance to translocate the tRNAs correctly. Binds to ribosomes in a GTP-dependent manner. The polypeptide is Elongation factor 4 (Chlamydia caviae (strain ATCC VR-813 / DSM 19441 / 03DC25 / GPIC) (Chlamydophila caviae)).